The primary structure comprises 209 residues: Kynurenine formamidase (209 aa).

Trp18 provides a ligand contact to substrate. Positions 48, 52, and 54 each coordinate Zn(2+). Residue His58 is the Proton donor/acceptor of the active site. Zn(2+) is bound by residues His160 and Glu172.

This sequence belongs to the Cyclase 1 superfamily. KynB family. Homodimer. It depends on Zn(2+) as a cofactor.

The catalysed reaction is N-formyl-L-kynurenine + H2O = L-kynurenine + formate + H(+). It functions in the pathway amino-acid degradation; L-tryptophan degradation via kynurenine pathway; L-kynurenine from L-tryptophan: step 2/2. Catalyzes the hydrolysis of N-formyl-L-kynurenine to L-kynurenine, the second step in the kynurenine pathway of tryptophan degradation. The polypeptide is Kynurenine formamidase (Paraburkholderia phymatum (strain DSM 17167 / CIP 108236 / LMG 21445 / STM815) (Burkholderia phymatum)).